Here is a 520-residue protein sequence, read N- to C-terminus: Ubiquitin carboxyl-terminal hydrolase 3 (520 aa).

Met-1 is subject to N-acetylmethionine. Residues 1–121 form a UBP-type zinc finger; it reads MECPHLSSSV…QKVREHLQNL (121 aa). Residues Cys-3, His-5, Cys-29, Cys-32, Cys-41, Cys-44, Cys-49, His-56, His-60, His-82, Cys-95, and Cys-98 each coordinate Zn(2+). Residues 159–511 enclose the USP domain; sequence TGLRNLGNTC…KAYILFYVER (353 aa). The active-site Nucleophile is the Cys-168. The active-site Proton acceptor is His-471.

Belongs to the peptidase C19 family. USP3 subfamily. Interacts (via UBP-type domain) with H2A; the interaction is less efficient than with monoubiquitinated H2A.

The protein resides in the nucleus. Its subcellular location is the cytoplasm. It catalyses the reaction Thiol-dependent hydrolysis of ester, thioester, amide, peptide and isopeptide bonds formed by the C-terminal Gly of ubiquitin (a 76-residue protein attached to proteins as an intracellular targeting signal).. In terms of biological role, deubiquitinase that plays a role in several cellular processes including transcriptional regulation, cell cycle progression or innate immunity. In response to DNA damage, deubiquitinates monoubiquitinated target proteins such as histone H2A and H2AX and thereby counteracts RNF168- and RNF8-mediated ubiquitination. In turn, participates in the recruitment of DNA damage repair factors to DNA break sites. Required for proper progression through S phase and subsequent mitotic entry. Acts as a positive regulator of TP53 by deubiquitinating and stabilizing it to promote normal cell proliferation and transformation. Participates in establishing tolerance innate immune memory through non-transcriptional feedback. Mechanistically, negatively regulates TLR-induced NF-kappa-B signaling by targeting and removing the 'Lys-63'-linked polyubiquitin chains on MYD88. Negatively regulates the activation of type I interferon signaling by mediating 'Lys-63'-linked polyubiquitin chains on RIGI and IFIH1. Also deubiquinates ASC/PYCARD, the central adapter mediating the assembly and activation of most inflammasomes, and thereby promotes inflammasome activation. The polypeptide is Ubiquitin carboxyl-terminal hydrolase 3 (Usp3) (Mus musculus (Mouse)).